We begin with the raw amino-acid sequence, 94 residues long: C-X-C motif chemokine 11-1 (94 aa).

Positions 1 to 19 (MKTVTALLLVSLAVVAIEG) are cleaved as a signal peptide. 2 disulfides stabilise this stretch: cysteine 27-cysteine 54 and cysteine 29-cysteine 71.

The protein belongs to the intercrine alpha (chemokine CxC) family.

It localises to the secreted. Ligand for cxcr3.2. Chemotactic for macrophages. This is C-X-C motif chemokine 11-1 (cxcl11.1) from Danio rerio (Zebrafish).